We begin with the raw amino-acid sequence, 278 residues long: HCLS1-associated protein X-1 (278 aa).

N-acetylserine is present on Ser2. The interval 2–43 (SVFDLFRGFFGFPGPRSHRDPFFGGMTRDDDDDEDDEEEEDS) is required for localization in mitochondria. Disordered stretches follow at residues 15 to 50 (GPRS…GRES) and 99 to 262 (LPSH…ALDD). The span at 30–43 (DDDDDEDDEEEEDS) shows a compositional bias: acidic residues. Positions 113-278 (TPGVRLREGQ…LLLGRWFRSR (166 aa)) are involved in HCLS1 binding. Basic and acidic residues predominate over residues 132-152 (PDSHQPRIFEGVLESHAKPES). Residues 174–205 (VSPHSRAREDKDLDSQVSQEGLGPLLQPQPKS) form an involved in CASP9 binding region. Positions 175–246 (SPHSRAREDK…TTVTHQEAHD (72 aa)) are involved in GNA13 binding. The tract at residues 182–278 (EDKDLDSQVS…LLLGRWFRSR (97 aa)) is required for localization in sarcoplasmic reticulum. An involved in PKD2 binding region spans residues 183–278 (DKDLDSQVSQ…LLLGRWFRSR (96 aa)). 2 positions are modified to phosphoserine: Ser188 and Ser191. The involved in PLN binding stretch occupies residues 202-224 (QPKSYFKSISVTKITKPDGTVEE). Positions 202-244 (QPKSYFKSISVTKITKPDGTVEEHRTVVDSEGRRETTVTHQEA) are involved in ATP2A2 binding. The interval 209 to 278 (SISVTKITKP…LLLGRWFRSR (70 aa)) is mediates interaction with UCP3. A compositionally biased stretch (basic and acidic residues) spans 216 to 254 (TKPDGTVEEHRTVVDSEGRRETTVTHQEAHDSSRSDPDP). The tract at residues 269–278 (LLLGRWFRSR) is required for ITGB6 binding.

It belongs to the HAX1 family. As to quaternary structure, interacts with ABCB1, ABCB4 and ABCB11. Directly associates with HCLS1/HS1, through binding to its N-terminal region. Interacts with CTTN. Interacts with PKD2. Interacts with GNA13. Interacts with CASP9. Interacts with ITGB6. Interacts with PLN and ATP2A2; these interactions are inhibited by calcium. Interacts with GRB7. Interacts (via C-terminus) with XIAP/BIRC4 (via BIR 2 domain and BIR 3 domain) and this interaction blocks ubiquitination of XIAP/BIRC4. Interacts with TPC2. Interacts with KCNC3. Interacts with XPO1. Interacts with RNF217. Interacts with UCP3; the interaction is direct and calcium-dependent. Interacts with MAPRE2; this interaction regulates cell migration in keratinocytes. In terms of tissue distribution, present in striated muscles (at protein level).

The protein resides in the mitochondrion matrix. Its subcellular location is the endoplasmic reticulum. It is found in the nucleus membrane. The protein localises to the cytoplasmic vesicle. It localises to the cytoplasm. The protein resides in the cell cortex. Its subcellular location is the cell membrane. It is found in the sarcoplasmic reticulum. The protein localises to the P-body. It localises to the nucleus. Functionally, recruits the Arp2/3 complex to the cell cortex and regulates reorganization of the cortical actin cytoskeleton via its interaction with KCNC3 and the Arp2/3 complex. Slows down the rate of inactivation of KCNC3 channels. Promotes GNA13-mediated cell migration. Involved in the clathrin-mediated endocytosis pathway. May be involved in internalization of ABC transporters such as ABCB11. May inhibit CASP9 and CASP3. Promotes cell survival. May regulate intracellular calcium pools. This Rattus norvegicus (Rat) protein is HCLS1-associated protein X-1 (Hax1).